The following is a 371-amino-acid chain: Phosphatase IMPL1, chloroplastic (371 aa).

Residues 1–60 constitute a chloroplast transit peptide; it reads MGRSLIFSGNMSLRISHLPRSSLPLQNPISGRTVNRTFRYRCTRILSNSFKSTTRLQTKA. Val-61 is modified (N-acetylvaline). The Mg(2+) site is built by Glu-148, Asp-165, Leu-167, and Asp-168. Glu-148 contributes to the substrate binding site. Substrate is bound by residues 167-170, 273-275, Glu-292, and Asp-299; these read LDGT and GAA. Mg(2+) is bound at residue Asp-299.

It belongs to the inositol monophosphatase superfamily. It depends on Mg(2+) as a cofactor. In terms of tissue distribution, ubiquitous. Expressed in pistil and seed endosperm.

The protein resides in the plastid. It localises to the chloroplast stroma. The enzyme catalyses a myo-inositol phosphate + H2O = myo-inositol + phosphate. It functions in the pathway polyol metabolism; myo-inositol biosynthesis; myo-inositol from D-glucose 6-phosphate: step 2/2. Phosphatase acting preferentially on D-myoinositol 1-phosphate (D-Ins 1-P). The protein is Phosphatase IMPL1, chloroplastic (IMPL1) of Arabidopsis thaliana (Mouse-ear cress).